A 313-amino-acid polypeptide reads, in one-letter code: Homoserine O-succinyltransferase (313 aa).

Catalysis depends on Cys142, which acts as the Acyl-thioester intermediate. Positions 163 and 192 each coordinate substrate. Catalysis depends on His235, which acts as the Proton acceptor. Residue Glu237 is part of the active site. Arg249 provides a ligand contact to substrate.

This sequence belongs to the MetA family.

The protein resides in the cytoplasm. It carries out the reaction L-homoserine + succinyl-CoA = O-succinyl-L-homoserine + CoA. It participates in amino-acid biosynthesis; L-methionine biosynthesis via de novo pathway; O-succinyl-L-homoserine from L-homoserine: step 1/1. Transfers a succinyl group from succinyl-CoA to L-homoserine, forming succinyl-L-homoserine. This chain is Homoserine O-succinyltransferase, found in Shewanella sp. (strain MR-4).